The following is a 400-amino-acid chain: MKLNGKHIVVGITGGIAAYKTIELIRLLRKAEAEVRVVLTPAAAEFVTPLTLQAISGNAVSQSLLDPQAELAMGHIELAKWADAIIIAPASADFIARLTIGMANDLLSTICLATNAPIFLAPAMNQQMYHQSITQQNLTTLQTRGIELIGPNSGFQACGDMGKGRMSEPEEIFTALSDFFSQKQDLQGLNVSITAGPTREAIDPVRYISNHSSGKMGFAIAEAFAKRGANVTLIAGPVNLTTPKNVNRINVISAQEMWQASLESAVKNQIFIGCAAVADYRVTEVAEQKIKKSGDEISIKLIKNPDIISDVGHLKTHRPFTVGFAAETQNVDDYAKDKLERKNLDMICANDVSGGQVFNADENALQLFWKNGHKKLSLKSKVELAADLVNEIIERYQKTL.

Residues 1-190 (MKLNGKHIVV…SQKQDLQGLN (190 aa)) are phosphopantothenoylcysteine decarboxylase. The Proton donor role is filled by C158. Residues 191 to 400 (VSITAGPTRE…EIIERYQKTL (210 aa)) form a phosphopantothenate--cysteine ligase region. CTP contacts are provided by residues 273 to 275 (GCA), D279, K289, 305 to 308 (PDII), F324, K338, and K342.

This sequence in the N-terminal section; belongs to the HFCD (homo-oligomeric flavin containing Cys decarboxylase) superfamily. It in the C-terminal section; belongs to the PPC synthetase family. Requires Mg(2+) as cofactor. FMN serves as cofactor.

The enzyme catalyses N-[(R)-4-phosphopantothenoyl]-L-cysteine + H(+) = (R)-4'-phosphopantetheine + CO2. It catalyses the reaction (R)-4'-phosphopantothenate + L-cysteine + CTP = N-[(R)-4-phosphopantothenoyl]-L-cysteine + CMP + diphosphate + H(+). The protein operates within cofactor biosynthesis; coenzyme A biosynthesis; CoA from (R)-pantothenate: step 2/5. It functions in the pathway cofactor biosynthesis; coenzyme A biosynthesis; CoA from (R)-pantothenate: step 3/5. Functionally, catalyzes two sequential steps in the biosynthesis of coenzyme A. In the first step cysteine is conjugated to 4'-phosphopantothenate to form 4-phosphopantothenoylcysteine. In the second step the latter compound is decarboxylated to form 4'-phosphopantotheine. The sequence is that of Coenzyme A biosynthesis bifunctional protein CoaBC from Haemophilus influenzae (strain ATCC 51907 / DSM 11121 / KW20 / Rd).